The primary structure comprises 403 residues: 26S proteasome regulatory subunit 8 (403 aa).

186–193 (GPPGTGKT) contributes to the ATP binding site.

The protein belongs to the AAA ATPase family.

The protein resides in the cytoplasm. Its subcellular location is the nucleus. Functionally, the 26S proteasome is involved in the ATP-dependent degradation of ubiquitinated proteins. The regulatory (or ATPase) complex confers ATP dependency and substrate specificity to the 26S complex. In Dictyostelium discoideum (Social amoeba), this protein is 26S proteasome regulatory subunit 8 (psmC5).